Reading from the N-terminus, the 425-residue chain is Adenylosuccinate synthetase (425 aa).

Residues Gly12–Lys18 and Gly40–Thr42 each bind GTP. Catalysis depends on Asp13, which acts as the Proton acceptor. Mg(2+) is bound by residues Asp13 and Gly40. IMP is bound by residues Asp13–Lys16, Asn38–His41, Thr130, Arg144, Gln224, Thr239, and Arg301. The active-site Proton donor is His41. Substrate is bound at residue Thr297–Arg303. Residues Arg303, Lys329–Asp331, and Ser411–Ser413 each bind GTP.

The protein belongs to the adenylosuccinate synthetase family. Homodimer. Mg(2+) is required as a cofactor.

Its subcellular location is the cytoplasm. It catalyses the reaction IMP + L-aspartate + GTP = N(6)-(1,2-dicarboxyethyl)-AMP + GDP + phosphate + 2 H(+). It participates in purine metabolism; AMP biosynthesis via de novo pathway; AMP from IMP: step 1/2. Functionally, plays an important role in the de novo pathway of purine nucleotide biosynthesis. Catalyzes the first committed step in the biosynthesis of AMP from IMP. This chain is Adenylosuccinate synthetase, found in Wolbachia pipientis subsp. Culex pipiens (strain wPip).